The primary structure comprises 263 residues: Transmembrane protein 176B (263 aa).

4 consecutive transmembrane segments (helical) span residues 61-81, 89-109, 125-145, and 197-217; these read LGVT…CLYF, ASGC…GIVI, LLLA…KSLI, and LFLA…VVSV. The interval 242–263 is disordered; that stretch reads KKLLGGDSAPASPTKEKIPVTP. Phosphoserine is present on residues S249 and S253.

The protein belongs to the TMEM176 family. In terms of tissue distribution, expressed in spleen by a variety of myeloid cells including macrophages and dendritic cells (at protein level). Ubiquitously expressed with higher expression in lymphoid tissues.

Its subcellular location is the nucleus membrane. In terms of biological role, required for the development of cerebellar granule cells. May play a role in the process of maturation of dendritic cells. The polypeptide is Transmembrane protein 176B (Tmem176b) (Rattus norvegicus (Rat)).